Reading from the N-terminus, the 294-residue chain is Sulfotransferase 1E1 (294 aa).

Position 47–52 (47–52 (KSGTTW)) interacts with 3'-phosphoadenylyl sulfate. 105 to 107 (KTH) is a binding site for substrate. The Proton acceptor role is filled by His107. 3'-phosphoadenylyl sulfate-binding positions include Arg129, Ser137, Tyr192, 226 to 231 (TSFQEM), and 256 to 258 (RKG).

It belongs to the sulfotransferase 1 family. As to quaternary structure, homodimer. Liver, intestine and at lower level in the kidney.

It localises to the cytoplasm. Its subcellular location is the cytosol. The catalysed reaction is estrone + 3'-phosphoadenylyl sulfate = estrone 3-sulfate + adenosine 3',5'-bisphosphate + H(+). The enzyme catalyses (24S)-hydroxycholesterol + 3'-phosphoadenylyl sulfate = (24S)-hydroxycholesterol 3-sulfate + adenosine 3',5'-bisphosphate + H(+). It carries out the reaction 17beta-estradiol + 3'-phosphoadenylyl sulfate = 17beta-estradiol 3-sulfate + adenosine 3',5'-bisphosphate + H(+). It catalyses the reaction 3beta-hydroxyandrost-5-en-17-one + 3'-phosphoadenylyl sulfate = dehydroepiandrosterone 3-sulfate + adenosine 3',5'-bisphosphate + H(+). The catalysed reaction is 4-ethylphenol + 3'-phosphoadenylyl sulfate = 4-ethylphenyl sulfate + adenosine 3',5'-bisphosphate + H(+). Its activity is regulated as follows. Inhibited by estradiol. Its function is as follows. Sulfotransferase that utilizes 3'-phospho-5'-adenylyl sulfate (PAPS) as sulfonate donor to catalyze the sulfate conjugation of estradiol and estrone. Is a key enzyme in estrogen homeostasis, the sulfation of estrogens leads to their inactivation. Also sulfates dehydroepiandrosterone (DHEA), pregnenolone, (24S)-hydroxycholesterol and xenobiotic compounds like ethinylestradiol, equalenin, diethyl stilbesterol and 1-naphthol at significantly lower efficiency. Does not sulfonate cortisol, testosterone and dopamine. May play a role in gut microbiota-host metabolic interaction. O-sulfonates 4-ethylphenol (4-EP), a dietary tyrosine-derived metabolite produced by gut bacteria. The product 4-EPS crosses the blood-brain barrier and may negatively regulate oligodendrocyte maturation and myelination, affecting the functional connectivity of different brain regions associated with the limbic system. The polypeptide is Sulfotransferase 1E1 (SULT1E1) (Homo sapiens (Human)).